Reading from the N-terminus, the 409-residue chain is Probable plastid-lipid-associated protein 12, chloroplastic (409 aa).

The transit peptide at 1–55 directs the protein to the chloroplast; that stretch reads MVAVRFYAVEMSLPCLCPCPSSPISLSLCSPRFNLLNTTSRRLGLSRNCRTLRIS.

Belongs to the PAP/fibrillin family.

Its subcellular location is the plastid. The protein resides in the chloroplast thylakoid. The protein is Probable plastid-lipid-associated protein 12, chloroplastic (PAP12) of Arabidopsis thaliana (Mouse-ear cress).